The primary structure comprises 374 residues: tRNA 2-selenouridine synthase (374 aa).

A Rhodanese domain is found at 12–136; the sequence is FLRDVPMLDT…MRGFLLQTID (125 aa). Cys-95 serves as the catalytic S-selanylcysteine intermediate.

Belongs to the SelU family. As to quaternary structure, monomer.

It catalyses the reaction 5-methylaminomethyl-2-thiouridine(34) in tRNA + selenophosphate + (2E)-geranyl diphosphate + H2O + H(+) = 5-methylaminomethyl-2-selenouridine(34) in tRNA + (2E)-thiogeraniol + phosphate + diphosphate. The catalysed reaction is 5-methylaminomethyl-2-thiouridine(34) in tRNA + (2E)-geranyl diphosphate = 5-methylaminomethyl-S-(2E)-geranyl-thiouridine(34) in tRNA + diphosphate. It carries out the reaction 5-methylaminomethyl-S-(2E)-geranyl-thiouridine(34) in tRNA + selenophosphate + H(+) = 5-methylaminomethyl-2-(Se-phospho)selenouridine(34) in tRNA + (2E)-thiogeraniol. The enzyme catalyses 5-methylaminomethyl-2-(Se-phospho)selenouridine(34) in tRNA + H2O = 5-methylaminomethyl-2-selenouridine(34) in tRNA + phosphate. In terms of biological role, involved in the post-transcriptional modification of the uridine at the wobble position (U34) of tRNA(Lys), tRNA(Glu) and tRNA(Gln). Catalyzes the conversion of 2-thiouridine (S2U-RNA) to 2-selenouridine (Se2U-RNA). Acts in a two-step process involving geranylation of 2-thiouridine (S2U) to S-geranyl-2-thiouridine (geS2U) and subsequent selenation of the latter derivative to 2-selenouridine (Se2U) in the tRNA chain. The chain is tRNA 2-selenouridine synthase from Bordetella petrii (strain ATCC BAA-461 / DSM 12804 / CCUG 43448).